A 282-amino-acid chain; its full sequence is Bicarbonate transport ATP-binding protein CmpD (282 aa).

The 234-residue stretch at 24–257 (LTIENVSKVY…RPRDRDRIME (234 aa)) folds into the ABC transporter domain. ATP is bound at residue 60–67 (GHSGCGKS).

The protein belongs to the ABC transporter superfamily. Nitrate/nitrite/cyanate uptake transporter (NitT) (TC 3.A.1.16) family. The complex is composed of two ATP-binding proteins (CmpC and CmpD), a transmembrane protein (CmpB) and a solute-binding protein (CmpA).

It is found in the cell inner membrane. Part of the ABC transporter complex CmpABCD involved in bicarbonate transport. Responsible for energy coupling to the transport system. The chain is Bicarbonate transport ATP-binding protein CmpD (cmpD) from Synechocystis sp. (strain ATCC 27184 / PCC 6803 / Kazusa).